A 1488-amino-acid chain; its full sequence is Indigoidine synthase (1488 aa).

An adenylation region spans residues 229–585 (KNRAQRHPEQ…GGDGVARGYL (357 aa)). The Carrier domain maps to 1137–1212 (APRNPLEHQV…KLAAWLSRAR (76 aa)). Serine 1172 bears the O-(pantetheine 4'-phosphoryl)serine mark. Residues 1230 to 1346 (PIYCWPGLGG…ERVAAMNRKA (117 aa)) are thioesterase.

It belongs to the ATP-dependent AMP-binding enzyme family. The cofactor is pantetheine 4'-phosphate.

The catalysed reaction is 2 FMN + 2 L-glutamine + 2 ATP + O2 = indigoidine + 2 FMNH2 + 2 AMP + 2 diphosphate + 2 H2O. The enzyme catalyses FMN + L-glutamine + ATP = 3-amino-1,5-dihydropyridine-2,6-dione + FMNH2 + AMP + diphosphate. It carries out the reaction 2 3-amino-1,5-dihydropyridine-2,6-dione + O2 = indigoidine + 2 H2O. The protein operates within pigment biosynthesis. Functionally, nonribosomal peptide synthetase involved in the biosynthesis of the blue pigment indigoidine, which is implicated in pathogenicity and protection from oxidative stress. Catalyzes the synthesis of the blue pigment using L-Gln as a substrate. Two glutamine molecules are cyclized and oxidized to form indigoidine. The protein is Indigoidine synthase of Dickeya dadantii (strain 3937) (Erwinia chrysanthemi (strain 3937)).